The following is a 394-amino-acid chain: Aromatic-amino-acid aminotransferase (394 aa).

Residues Gly-34, Tyr-65, Trp-127, and Asn-180 each contribute to the substrate site. Lys-243 is subject to N6-(pyridoxal phosphate)lysine. Substrate is bound at residue Arg-371.

The protein belongs to the class-I pyridoxal-phosphate-dependent aminotransferase family. In terms of assembly, homodimer. Requires pyridoxal 5'-phosphate as cofactor.

The protein localises to the cytoplasm. The enzyme catalyses an aromatic L-alpha-amino acid + 2-oxoglutarate = an aromatic oxo-acid + L-glutamate. Functionally, shows activities toward both dicarboxylic and aromatic substrates. In Paracoccus denitrificans, this protein is Aromatic-amino-acid aminotransferase (tyrB).